The following is a 423-amino-acid chain: D-tagatose-1,6-bisphosphate aldolase subunit GatZ (423 aa).

This sequence belongs to the GatZ/KbaZ family. GatZ subfamily. Forms a complex with GatY.

It participates in carbohydrate metabolism; D-tagatose 6-phosphate degradation; D-glyceraldehyde 3-phosphate and glycerone phosphate from D-tagatose 6-phosphate: step 2/2. Its function is as follows. Component of the tagatose-1,6-bisphosphate aldolase GatYZ that is required for full activity and stability of the Y subunit. Could have a chaperone-like function for the proper and stable folding of GatY. When expressed alone, GatZ does not show any aldolase activity. Is involved in the catabolism of galactitol. The sequence is that of D-tagatose-1,6-bisphosphate aldolase subunit GatZ from Salmonella agona (strain SL483).